Here is a 42-residue protein sequence, read N- to C-terminus: Photosystem I reaction center subunit IX (42 aa).

The helical transmembrane segment at 7–27 (YLSTAPVLAAIWFAILAGLLI) threads the bilayer.

It belongs to the PsaJ family.

The protein localises to the plastid. It is found in the chloroplast thylakoid membrane. Its function is as follows. May help in the organization of the PsaE and PsaF subunits. This is Photosystem I reaction center subunit IX from Zygnema circumcarinatum (Green alga).